The chain runs to 333 residues: Phosphoribosylformylglycinamidine cyclo-ligase (333 aa).

It belongs to the AIR synthase family.

It localises to the cytoplasm. It carries out the reaction 2-formamido-N(1)-(5-O-phospho-beta-D-ribosyl)acetamidine + ATP = 5-amino-1-(5-phospho-beta-D-ribosyl)imidazole + ADP + phosphate + H(+). It participates in purine metabolism; IMP biosynthesis via de novo pathway; 5-amino-1-(5-phospho-D-ribosyl)imidazole from N(2)-formyl-N(1)-(5-phospho-D-ribosyl)glycinamide: step 2/2. The chain is Phosphoribosylformylglycinamidine cyclo-ligase from Clostridium perfringens (strain ATCC 13124 / DSM 756 / JCM 1290 / NCIMB 6125 / NCTC 8237 / Type A).